Consider the following 42-residue polypeptide: Large ribosomal subunit protein bL34c (42 aa).

Belongs to the bacterial ribosomal protein bL34 family.

It localises to the plastid. The protein resides in the chloroplast. In Olisthodiscus luteus (Marine phytoflagellate), this protein is Large ribosomal subunit protein bL34c (rpl34).